We begin with the raw amino-acid sequence, 530 residues long: Structure-specific endonuclease subunit SLX1 homolog 2 (530 aa).

The region spanning 4 to 89 (RFHCVYLLTS…PTKSTRLKTQ (86 aa)) is the GIY-YIG domain. The segment at 232-365 (CALCSLPLRS…PSQPCPCPLC (134 aa)) adopts an SLX1-type zinc-finger fold. 3 disordered regions span residues 276–306 (ATMG…MDAH), 410–438 (NSSL…YCGD), and 474–502 (LPPS…RMTD). Positions 283–298 (RNERSGEYSNKIKDDS) are enriched in basic and acidic residues.

It belongs to the SLX1 family. In terms of assembly, forms a heterodimer with a member of the SLX4 family. The cofactor is a divalent metal cation.

The protein resides in the nucleus. In terms of biological role, catalytic subunit of a heterodimeric structure-specific endonuclease that resolves DNA secondary structures generated during DNA repair and recombination. Has endonuclease activity towards branched DNA substrates, introducing single-strand cuts in duplex DNA close to junctions with ss-DNA. In Trypanosoma cruzi (strain CL Brener), this protein is Structure-specific endonuclease subunit SLX1 homolog 2.